Here is a 259-residue protein sequence, read N- to C-terminus: MNWLEAFILGIIQGLTEFLPISSTGHLYLGRHLFQLDEAGLFLDTMLHIGTLLAVFIYYKKEFIYLIKNPFSKLMLLLIVGTIPAVVIGLLFKDFFEDISKTGITIGWEFLVTGFFLYVADKQKNGRKKMGDITYKDAFIIGSFQAAAIFPAISRSGMTIVAALWRKLDRETAAYFSFLLSTPAIVGAIILQFADVFQGKAESISSTSLIVGTLSAAFFGYIAVSWMIQYLKRHSLKVFAYYVWGLGILILTLQFTDVF.

Helical transmembrane passes span 1-21, 39-59, 71-91, 99-119, 133-153, 173-193, 208-228, and 239-259; these read MNWL…FLPI, AGLF…FIYY, FSKL…IGLL, ISKT…FLYV, ITYK…FPAI, AAYF…ILQF, SLIV…SWMI, and FAYY…TDVF.

Belongs to the UppP family.

It is found in the cell membrane. It catalyses the reaction di-trans,octa-cis-undecaprenyl diphosphate + H2O = di-trans,octa-cis-undecaprenyl phosphate + phosphate + H(+). Its function is as follows. Catalyzes the dephosphorylation of undecaprenyl diphosphate (UPP). Confers resistance to bacitracin. This chain is Undecaprenyl-diphosphatase 4, found in Bacillus thuringiensis subsp. konkukian (strain 97-27).